A 127-amino-acid chain; its full sequence is Mediator of RNA polymerase II transcription subunit 9 (127 aa).

Residues 95–119 (QKEQEIEAKKRVHRQLRQRVEEIAG) are a coiled coil.

Belongs to the Mediator complex subunit 9 family. Component of the Mediator complex.

The protein localises to the nucleus. Component of the Mediator complex, a coactivator involved in the regulated transcription of nearly all RNA polymerase II-dependent genes. Mediator functions as a bridge to convey information from gene-specific regulatory proteins to the basal RNA polymerase II transcription machinery. Mediator is recruited to promoters by direct interactions with regulatory proteins and serves as a scaffold for the assembly of a functional preinitiation complex with RNA polymerase II and the general transcription factors. The polypeptide is Mediator of RNA polymerase II transcription subunit 9 (CSE2) (Eremothecium gossypii (strain ATCC 10895 / CBS 109.51 / FGSC 9923 / NRRL Y-1056) (Yeast)).